The chain runs to 343 residues: Protein RecA (343 aa).

Position 65–72 (65–72 (GPESSGKT)) interacts with ATP.

Belongs to the RecA family.

The protein resides in the cytoplasm. Its function is as follows. Can catalyze the hydrolysis of ATP in the presence of single-stranded DNA, the ATP-dependent uptake of single-stranded DNA by duplex DNA, and the ATP-dependent hybridization of homologous single-stranded DNAs. It interacts with LexA causing its activation and leading to its autocatalytic cleavage. The polypeptide is Protein RecA (Campylobacter jejuni subsp. doylei (strain ATCC BAA-1458 / RM4099 / 269.97)).